Consider the following 66-residue polypeptide: Ocellatin-PT5 (66 aa).

Positions 1 to 22 (MAFLKKSLFLVLFLGLVSLSIC) are cleaved as a signal peptide. Residues 23-39 (DEEKRQDEDDDDDDDEE) constitute a propeptide that is removed on maturation. The residue at position 66 (Val-66) is a Valine amide.

Expressed by the skin glands.

The protein resides in the secreted. Its function is as follows. Has antibacterial activity against Gram-negative bacterium E.coli ATCC 25922 (MIC=300 uM) but not against S.pneumoniae ATCC 700603, S.choleraesuis ATCC 14028 or Gram-positive bacterium S.aureus ATCC 29313. Shows very little hemolytic activity and no cytotoxicity. This chain is Ocellatin-PT5, found in Leptodactylus pustulatus (Ceara white-lipped frog).